Reading from the N-terminus, the 607-residue chain is Cyclic-di-GMP receptor FimW (607 aa).

Positions 323-492 are pilZ-like domain; it reads ERTFQRTQGQ…GGTQMGIEMI (170 aa). The RXXXR motif signature appears at 324 to 328; that stretch reads RTFQR. The short motif at 435-440 is the D/NXSXXG motif element; the sequence is NHSPGG. A compositionally biased stretch (polar residues) spans 568 to 582; it reads SQFEYRSAEPVNTPS. The tract at residues 568 to 607 is disordered; sequence SQFEYRSAEPVNTPSDKPVTAPVARPPAGEEDFDSLWKSL.

As to quaternary structure, monomer in the absence of c-di-GMP. Forms dimers in the presence of c-di-GMP.

It localises to the cytoplasm. High-affinity cyclic-di-GMP binding protein that regulates type IV pili (T4P) elongation. Required for T4P-mediated surface attachment and walking motility during the early phases of surface colonization. Not required for twitching motility. Does not bind related nucleotides such as GMP, GDP, GTP or ATP. The polypeptide is Cyclic-di-GMP receptor FimW (Pseudomonas aeruginosa (strain ATCC 15692 / DSM 22644 / CIP 104116 / JCM 14847 / LMG 12228 / 1C / PRS 101 / PAO1)).